Consider the following 721-residue polypeptide: Protein mu-NS (721 aa).

Residues 1–13 (MASFKGFSVNTVP) are interaction with sigma-NS. The interval 1-38 (MASFKGFSVNTVPVSKAKRDISSLAATPGIRSQPFTPS) is RNA-binding. The tract at residues 14-40 (VSKAKRDISSLAATPGIRSQPFTPSVD) is interaction with mu-2. The segment at 471–721 (SSDMVDGIKL…IDFSVPTDEL (251 aa)) is involved in the formation of factory-like inclusions. 2 coiled-coil regions span residues 523–560 (LLSQ…SAQA) and 628–686 (QMNG…NQRQ).

This sequence belongs to the orthoreovirus mu-NS protein family. As to quaternary structure, interacts with mu-2. Interacts with sigma-NS; in viral factories. Interacts with the inner capsid proteins lambda-1 and sigma-2, and outer capsid protein lambda-2; in viral factories. In terms of processing, the N-terminus is blocked.

Its subcellular location is the host cytoplasm. In terms of biological role, non-structural protein implicated with protein sigma-NS in forming the matrix of viral factories, which are large inclusions in the host cytoplasm where replication intermediates are assembled and viral RNA replication takes place. Together with mu-2, recruits the other core proteins to these factories. The chain is Protein mu-NS (M3) from Mammalia (T1L).